A 220-amino-acid polypeptide reads, in one-letter code: PKHD-type hydroxylase PCC7424_1929 (220 aa).

Residues lysine 77 to serine 173 enclose the Fe2OG dioxygenase domain. Fe cation-binding residues include histidine 95, aspartate 97, and histidine 154. Position 164 (arginine 164) interacts with 2-oxoglutarate.

Requires Fe(2+) as cofactor. L-ascorbate serves as cofactor.

This chain is PKHD-type hydroxylase PCC7424_1929, found in Gloeothece citriformis (strain PCC 7424) (Cyanothece sp. (strain PCC 7424)).